The following is a 293-amino-acid chain: 4-hydroxy-tetrahydrodipicolinate synthase (293 aa).

A pyruvate-binding site is contributed by Thr44. Residue Tyr132 is the Proton donor/acceptor of the active site. The Schiff-base intermediate with substrate role is filled by Lys160. Residue Ile202 participates in pyruvate binding.

This sequence belongs to the DapA family. As to quaternary structure, homotetramer; dimer of dimers.

It localises to the cytoplasm. The enzyme catalyses L-aspartate 4-semialdehyde + pyruvate = (2S,4S)-4-hydroxy-2,3,4,5-tetrahydrodipicolinate + H2O + H(+). It functions in the pathway amino-acid biosynthesis; L-lysine biosynthesis via DAP pathway; (S)-tetrahydrodipicolinate from L-aspartate: step 3/4. Its function is as follows. Catalyzes the condensation of (S)-aspartate-beta-semialdehyde [(S)-ASA] and pyruvate to 4-hydroxy-tetrahydrodipicolinate (HTPA). The chain is 4-hydroxy-tetrahydrodipicolinate synthase from Pelagibacter ubique (strain HTCC1062).